Here is a 599-residue protein sequence, read N- to C-terminus: Protein linkin (599 aa).

An N-terminal signal peptide occupies residues 1–19 (MKKILPIIWLINLVSGSLS). The Extracellular portion of the chain corresponds to 20 to 553 (LEKKAPDLLG…SRLYVTPSAL (534 aa)). N-linked (GlcNAc...) asparagine glycans are attached at residues Asn-50, Asn-117, Asn-163, Asn-361, and Asn-378. Residues 554-574 (IVQSLAVIALVCCMLLMVVVF) traverse the membrane as a helical segment. At 575–599 (LHYREKKEDRYERQQQSHRFHFDAM) the chain is on the cytoplasmic side.

The protein belongs to the TIP family. In terms of tissue distribution, expressed in all somatic gonadal cells including distal tip cells, anchor cell, uterine precursor cells and spermatheca precursor cells of the hermaphrodite. Also expressed in the pharynx, pharyngeal-intestinal valve, intestine, excretory cell and canal, seam cells, a subset of hypodermal cells, vulval precursor cells of the hermaphrodite and hook precursor cells in the male.

Its subcellular location is the apical cell membrane. It localises to the lateral cell membrane. Probable cell adhesion protein involved in gonadal cell migration. This Caenorhabditis elegans protein is Protein linkin.